We begin with the raw amino-acid sequence, 266 residues long: Ribosomal RNA small subunit methyltransferase A (266 aa).

Residues asparagine 16, leucine 18, glycine 43, glutamate 64, aspartate 89, and asparagine 110 each contribute to the S-adenosyl-L-methionine site.

The protein belongs to the class I-like SAM-binding methyltransferase superfamily. rRNA adenine N(6)-methyltransferase family. RsmA subfamily.

Its subcellular location is the cytoplasm. The catalysed reaction is adenosine(1518)/adenosine(1519) in 16S rRNA + 4 S-adenosyl-L-methionine = N(6)-dimethyladenosine(1518)/N(6)-dimethyladenosine(1519) in 16S rRNA + 4 S-adenosyl-L-homocysteine + 4 H(+). Functionally, specifically dimethylates two adjacent adenosines (A1518 and A1519) in the loop of a conserved hairpin near the 3'-end of 16S rRNA in the 30S particle. May play a critical role in biogenesis of 30S subunits. The chain is Ribosomal RNA small subunit methyltransferase A from Marinomonas sp. (strain MWYL1).